The sequence spans 301 residues: Probable alpha-L-glutamate ligase (301 aa).

The ATP-grasp domain maps to 104–287 (LQLLSRKGVG…VAALVMEFIE (184 aa)). ATP is bound by residues Lys-141, 178–179 (EY), Asp-187, and 211–213 (RSN). Residues Asp-248, Glu-260, and Asn-262 each contribute to the Mg(2+) site. 3 residues coordinate Mn(2+): Asp-248, Glu-260, and Asn-262.

It belongs to the RimK family. The cofactor is Mg(2+). Mn(2+) is required as a cofactor.

The polypeptide is Probable alpha-L-glutamate ligase (Saccharophagus degradans (strain 2-40 / ATCC 43961 / DSM 17024)).